The chain runs to 464 residues: Kynureninase 2 (464 aa).

Residues L135, T136, 163-166 (FPSD), D248, H251, and Y273 contribute to the pyridoxal 5'-phosphate site. Position 274 is an N6-(pyridoxal phosphate)lysine (K274). Pyridoxal 5'-phosphate contacts are provided by W313 and N341.

The protein belongs to the kynureninase family. In terms of assembly, homodimer. Pyridoxal 5'-phosphate serves as cofactor.

The protein resides in the cytoplasm. It catalyses the reaction L-kynurenine + H2O = anthranilate + L-alanine + H(+). The enzyme catalyses 3-hydroxy-L-kynurenine + H2O = 3-hydroxyanthranilate + L-alanine + H(+). It functions in the pathway amino-acid degradation; L-kynurenine degradation; L-alanine and anthranilate from L-kynurenine: step 1/1. The protein operates within cofactor biosynthesis; NAD(+) biosynthesis; quinolinate from L-kynurenine: step 2/3. Catalyzes the cleavage of L-kynurenine (L-Kyn) and L-3-hydroxykynurenine (L-3OHKyn) into anthranilic acid (AA) and 3-hydroxyanthranilic acid (3-OHAA), respectively. The chain is Kynureninase 2 (bna5-2) from Aspergillus fumigatus (strain CBS 144.89 / FGSC A1163 / CEA10) (Neosartorya fumigata).